Consider the following 355-residue polypeptide: Peptide chain release factor 1 (355 aa).

An N5-methylglutamine modification is found at Gln230.

The protein belongs to the prokaryotic/mitochondrial release factor family. Methylated by PrmC. Methylation increases the termination efficiency of RF1.

It is found in the cytoplasm. In terms of biological role, peptide chain release factor 1 directs the termination of translation in response to the peptide chain termination codons UAG and UAA. This chain is Peptide chain release factor 1, found in Geobacter metallireducens (strain ATCC 53774 / DSM 7210 / GS-15).